Here is a 224-residue protein sequence, read N- to C-terminus: UPF0758 protein Bpro_0948 (224 aa).

An MPN domain is found at 102–224 (LFSTPQAVRD…AVSMAELGLL (123 aa)). Zn(2+) is bound by residues His173, His175, and Asp186. Residues 173 to 186 (HNHPSGAATPSRAD) carry the JAMM motif motif.

The protein belongs to the UPF0758 family.

This Polaromonas sp. (strain JS666 / ATCC BAA-500) protein is UPF0758 protein Bpro_0948.